A 342-amino-acid polypeptide reads, in one-letter code: MTQFNIPVTMSSSLSIILVILVSLRTALSELCNPQDKQALLQIKKDLGNPTTLSSWLPTTDCCNRTWLGVLCDTDTQTYRVNNLDLSGHNLPKPYPIPSSLANLPYLNFLYIGGINNLVGPIPPAIAKLTQLHYLYITHTNVSGAIPDFLSQIKTLVTLDFSYNALSGTLPPSISSLPNLGGITFDGNRISGAIPDSYGSFSKLFTAMTISRNRLTGKIPPTFANLNLAFVDLSRNMLEGDASVLFGSDKNTKKIHLAKNSLAFDLGKVGLSKNLNGLDLRNNRIYGTLPQGLTQLKFLQSLNVSFNNLCGEIPQGGNLKRFDVSSYANNKCLCGSPLPSCT.

A signal peptide spans 1–29; it reads MTQFNIPVTMSSSLSIILVILVSLRTALS. Cystine bridges form between C32–C62 and C63–C72. A glycan (N-linked (GlcNAc...) asparagine) is linked at N64. LRR repeat units follow at residues 82 to 107, 108 to 132, 133 to 156, 157 to 180, 181 to 205, 206 to 228, 229 to 252, 253 to 275, 276 to 299, and 300 to 319; these read NNLD…LPYL, NFLY…LTQL, HYLY…IKTL, VTLD…LPNL, GGIT…SKLF, TAMT…NLNL, AFVD…DKNT, KKIH…SKNL, NGLD…LKFL, and QSLN…GGNL. A glycan (N-linked (GlcNAc...) asparagine) is linked at N141. N303 carries N-linked (GlcNAc...) asparagine glycosylation. Disulfide bonds link C310/C332 and C334/C341.

Belongs to the polygalacturonase-inhibiting protein family.

It localises to the secreted. Its subcellular location is the cell wall. It is found in the membrane. Its function is as follows. Inhibitor of fungal polygalacturonase. It is an important factor for plant resistance to phytopathogenic fungi. Substrate preference is polygalacturonase (PG) from A.niger &gt;&gt; PG of F.oxysporum, A.solani or B.cinerea. Not active on PG from F.moniliforme. The protein is Polygalacturonase inhibitor 1 (PGIP1) of Phaseolus vulgaris (Kidney bean).